Reading from the N-terminus, the 193-residue chain is Biphenyl dioxygenase subunit beta (193 aa).

Belongs to the bacterial ring-hydroxylating dioxygenase beta subunit family. In terms of assembly, heterohexamer consisting of 3 BphA1 subunits and 3 BphA2 subunits. A ferredoxin (BphA3) and a ferredoxin reductase (BphA4) must be present to obtain activity.

The catalysed reaction is biphenyl + NADH + O2 + H(+) = (2R,3S)-3-phenylcyclohexa-3,5-diene-1,2-diol + NAD(+). It participates in xenobiotic degradation; biphenyl degradation; 2-hydroxy-2,4-pentadienoate and benzoate from biphenyl: step 1/4. Its function is as follows. The beta subunit may be responsible for the substrate specificity of the enzyme. This Pseudomonas sp. (strain KKS102) protein is Biphenyl dioxygenase subunit beta (bphA2).